Reading from the N-terminus, the 1482-residue chain is Chromosome partition protein MukB (1482 aa).

34 to 41 (GGNGAGKS) serves as a coordination point for ATP. Coiled-coil stretches lie at residues 326–472 (LEAD…QTAH), 507–602 (NQRH…RRAP), 780–805 (RAAR…ATLS), 832–1110 (DDPE…REQV), and 1209–1265 (VEAI…LQSV). Residues 666–783 (PGGSEDPRLN…SLPLFGRAAR (118 aa)) are flexible hinge.

The protein belongs to the SMC family. MukB subfamily. In terms of assembly, homodimerization via its hinge domain. Binds to DNA via its C-terminal region. Interacts, and probably forms a ternary complex, with MukE and MukF via its C-terminal region. The complex formation is stimulated by calcium or magnesium. Interacts with tubulin-related protein FtsZ.

The protein localises to the cytoplasm. Its subcellular location is the nucleoid. Functionally, plays a central role in chromosome condensation, segregation and cell cycle progression. Functions as a homodimer, which is essential for chromosome partition. Involved in negative DNA supercoiling in vivo, and by this means organize and compact chromosomes. May achieve or facilitate chromosome segregation by condensation DNA from both sides of a centrally located replisome during cell division. The chain is Chromosome partition protein MukB from Klebsiella pneumoniae subsp. pneumoniae (strain ATCC 700721 / MGH 78578).